The sequence spans 79 residues: MSNQFNAGDTVYVIYRNPHAANVAHIKEAEIVHHPYHEGELSLFIYETYHPFAEDDAVFASYEEAKSLYKELFDIDPYE.

Regulator of the spore photoproduct lyase operon (splAB). This chain is Transcriptional regulator SplA (splA), found in Bacillus subtilis (strain 168).